Here is a 404-residue protein sequence, read N- to C-terminus: Exodeoxyribonuclease 7 large subunit (404 aa).

Belongs to the XseA family. As to quaternary structure, heterooligomer composed of large and small subunits.

It is found in the cytoplasm. The enzyme catalyses Exonucleolytic cleavage in either 5'- to 3'- or 3'- to 5'-direction to yield nucleoside 5'-phosphates.. Its function is as follows. Bidirectionally degrades single-stranded DNA into large acid-insoluble oligonucleotides, which are then degraded further into small acid-soluble oligonucleotides. The protein is Exodeoxyribonuclease 7 large subunit of Mesoplasma florum (strain ATCC 33453 / NBRC 100688 / NCTC 11704 / L1) (Acholeplasma florum).